The chain runs to 150 residues: SsrA-binding protein (150 aa).

The protein belongs to the SmpB family.

The protein resides in the cytoplasm. Its function is as follows. Required for rescue of stalled ribosomes mediated by trans-translation. Binds to transfer-messenger RNA (tmRNA), required for stable association of tmRNA with ribosomes. tmRNA and SmpB together mimic tRNA shape, replacing the anticodon stem-loop with SmpB. tmRNA is encoded by the ssrA gene; the 2 termini fold to resemble tRNA(Ala) and it encodes a 'tag peptide', a short internal open reading frame. During trans-translation Ala-aminoacylated tmRNA acts like a tRNA, entering the A-site of stalled ribosomes, displacing the stalled mRNA. The ribosome then switches to translate the ORF on the tmRNA; the nascent peptide is terminated with the 'tag peptide' encoded by the tmRNA and targeted for degradation. The ribosome is freed to recommence translation, which seems to be the essential function of trans-translation. This Bacteroides thetaiotaomicron (strain ATCC 29148 / DSM 2079 / JCM 5827 / CCUG 10774 / NCTC 10582 / VPI-5482 / E50) protein is SsrA-binding protein.